Consider the following 140-residue polypeptide: Small ribosomal subunit protein bS6 (140 aa).

A disordered region spans residues 96–140; the sequence is VTGQSEMLKAEENRSERRERRDRPEHEGADSADSDDSDNSDNADE. Over residues 103-124 the composition is skewed to basic and acidic residues; that stretch reads LKAEENRSERRERRDRPEHEGA. Residues 125–140 are compositionally biased toward acidic residues; the sequence is DSADSDDSDNSDNADE.

It belongs to the bacterial ribosomal protein bS6 family.

Binds together with bS18 to 16S ribosomal RNA. This chain is Small ribosomal subunit protein bS6, found in Pseudomonas fluorescens (strain SBW25).